A 597-amino-acid chain; its full sequence is Apurinic-apyrimidinic endonuclease 1 (597 aa).

A compositionally biased stretch (polar residues) spans 232–246 (YNNDTKYLSNPKGVT). The segment at 232-296 (YNNDTKYLSN…IPPIPKNTED (65 aa)) is disordered. Residues 265-274 (NNNNNNNNNK) are compositionally biased toward low complexity. Histidine 380, histidine 420, glutamate 456, aspartate 490, histidine 493, histidine 527, aspartate 540, histidine 542, and glutamate 572 together coordinate Zn(2+). Residue histidine 493 participates in Mn(2+) binding. Residues aspartate 540 and histidine 542 each contribute to the Mn(2+) site.

Belongs to the AP endonuclease 2 family. Zn(2+) is required as a cofactor. Requires Mn(2+) as cofactor. Post-translationally, may be proteolytically cleaved into a 59 kDa form.

Its subcellular location is the mitochondrion. Its activity is regulated as follows. Apurinic/apyrimidinic (AP) endonuclease activity is enhanced with increasing concentrations of Mn(2+), while Zn(2+) initially enhances activity but subsequently inhibits activity in a concentration-dependent manner. Co(2+) inhibits apurinic/apyrimidinic (AP) endonuclease activity at concentrations greater than 2.5 mM. In terms of biological role, plays a role in mitochondrial DNA base excision repair (BER) pathway induced by oxidative stress. Has apurinic/apyrimidinic (AP) endonuclease activity towards double-stranded DNA (dsDNA) with a preference for C as opposite base. Has 3'-phosphatase activity; removes 3'-phosphate from blunt-end, recessed, and gapped DNA templates and thus, removes 3'-blocks for DNA polymerase activity during BER. Lacks 3'-5' exonuclease activity and does not cleave damaged bases by nucleotide incision repair (NIR). This chain is Apurinic-apyrimidinic endonuclease 1, found in Plasmodium falciparum (isolate 3D7).